Here is a 217-residue protein sequence, read N- to C-terminus: 3,4-dihydroxy-2-butanone 4-phosphate synthase (217 aa).

D-ribulose 5-phosphate-binding positions include 37-38 (RE), Asp42, 150-154 (RRGHT), and Glu174. A Mg(2+)-binding site is contributed by Glu38. His153 serves as a coordination point for Mg(2+).

This sequence belongs to the DHBP synthase family. Homodimer. Requires Mg(2+) as cofactor. Mn(2+) serves as cofactor.

It carries out the reaction D-ribulose 5-phosphate = (2S)-2-hydroxy-3-oxobutyl phosphate + formate + H(+). It participates in cofactor biosynthesis; riboflavin biosynthesis; 2-hydroxy-3-oxobutyl phosphate from D-ribulose 5-phosphate: step 1/1. In terms of biological role, catalyzes the conversion of D-ribulose 5-phosphate to formate and 3,4-dihydroxy-2-butanone 4-phosphate. This is 3,4-dihydroxy-2-butanone 4-phosphate synthase from Shewanella loihica (strain ATCC BAA-1088 / PV-4).